The following is a 599-amino-acid chain: Stromal 70 kDa heat shock-related protein, chloroplastic (599 aa).

The tract at residues 545 to 573 (NQPGAGGEPGAAQAQHQEQSSARQIQRAK) is disordered. Residues 554-568 (GAAQAQHQEQSSARQ) show a composition bias toward low complexity.

This sequence belongs to the heat shock protein 70 family.

The protein resides in the plastid. It is found in the chloroplast stroma. Its function is as follows. Interacts with newly imported chloroplast proteins to assist in their maturation. The protein is Stromal 70 kDa heat shock-related protein, chloroplastic (CHSP70) of Spinacia oleracea (Spinach).